Here is a 316-residue protein sequence, read N- to C-terminus: ATP synthase gamma chain (316 aa).

This sequence belongs to the ATPase gamma chain family. In terms of assembly, F-type ATPases have 2 components, CF(1) - the catalytic core - and CF(0) - the membrane proton channel. CF(1) has five subunits: alpha(3), beta(3), gamma(1), delta(1), epsilon(1). CF(0) has three main subunits: a, b and c.

The protein resides in the cellular thylakoid membrane. In terms of biological role, produces ATP from ADP in the presence of a proton gradient across the membrane. The gamma chain is believed to be important in regulating ATPase activity and the flow of protons through the CF(0) complex. This is ATP synthase gamma chain from Prochlorococcus marinus (strain MIT 9313).